A 649-amino-acid chain; its full sequence is Protein WHI4 (649 aa).

Phosphoserine is present on residues S22 and S206. 2 disordered regions span residues 196-217 and 228-247; these read EHVS…SSAQ and ISYG…KPRP. A compositionally biased stretch (polar residues) spans 228 to 238; the sequence is ISYGKTSSSPL. 2 positions are modified to phosphoserine: S258 and S283. Disordered regions lie at residues 438-461 and 604-649; these read LDLN…SIFN and QLPH…YGKS. The 93-residue stretch at 533-625 folds into the RRM domain; that stretch reads NTLYVGNLPP…GGIRLSFSKN (93 aa). Polar residues predominate over residues 631–649; sequence GSNSRSKSGYSFNGSYGKS.

Phosphorylated by PKA in vitro.

Its subcellular location is the cytoplasm. Has a partially redundant function to WHI3, a dosage-dependent modulator of cell size. This chain is Protein WHI4 (WHI4), found in Saccharomyces cerevisiae (strain ATCC 204508 / S288c) (Baker's yeast).